Consider the following 350-residue polypeptide: MNMMIKAYKRKLDVANGRIDLSHGAGGRAMGQLIEGIFHKAFDNDWLRAGNDQSAFSVPGGRMVMTTDGYVVSPLFFPGGNIGTLAVHGTINDIAMAGAVPLYLSASFIIEEGFPLVDLERIADSMGAASREAGVPIITGDTKVVERGKADGVFISTAGIGMAPDGLDLRSDAARPGDAVIISGSIGDHGVAVMSKRENLEFDTDIVSDSAALHGLVADMVAAGGAHIRLMRDPTRGGIAATLNEIASQSRVGFRIDEEAIPMKPEVAAACEFLGLDPLNVANEGKLVAVVAPEGADAVLAAIHAHPLGAEAALIGHVVADDNYFVQMVTSFGGGRIVDWLSGEQLPRIC.

Residue Cys-350 is modified to S-carbamoylcysteine. Residue Cys-350 is modified to S-cyanocysteine.

Belongs to the HypE family. Post-translationally, modified by HypF, which adds a carboxamido group to the thiolate of the C-terminal cysteine, yielding a protein-S-carboxamide. The carboxamido group is then dehydrated by HypE itself to yield a protein-thiocyanate.

The catalysed reaction is C-terminal S-carboxamide-L-cysteinyl-[HypE protein] + ATP = C-terminal S-cyanate-L-cysteinyl-[HypE protein] + ADP + phosphate + H(+). It participates in protein modification; [NiFe] hydrogenase maturation. Functionally, involved in the maturation of [NiFe] hydrogenases. Along with HypF, it catalyzes the synthesis of the CN ligands of the active site iron of [NiFe]-hydrogenases. HypE catalyzes the ATP-dependent dehydration of the carboxamido group attached to its C-terminal cysteine to a cyano group. In Rhizobium leguminosarum bv. viciae, this protein is Carbamoyl dehydratase HypE.